Consider the following 256-residue polypeptide: Probable ribosomal RNA small subunit methyltransferase A (256 aa).

6 residues coordinate S-adenosyl-L-methionine: His-8, Leu-10, Gly-34, Glu-55, Asp-83, and Asn-98.

This sequence belongs to the class I-like SAM-binding methyltransferase superfamily. rRNA adenine N(6)-methyltransferase family. RsmA subfamily.

The protein resides in the cytoplasm. Specifically dimethylates two adjacent adenosines in the loop of a conserved hairpin near the 3'-end of 16S rRNA in the 30S particle. May play a critical role in biogenesis of 30S subunits. The chain is Probable ribosomal RNA small subunit methyltransferase A from Methanospirillum hungatei JF-1 (strain ATCC 27890 / DSM 864 / NBRC 100397 / JF-1).